The chain runs to 282 residues: Ribosomal protein L11 methyltransferase (282 aa).

S-adenosyl-L-methionine contacts are provided by Thr-133, Gly-154, Asp-175, and Asn-216.

This sequence belongs to the methyltransferase superfamily. PrmA family.

The protein resides in the cytoplasm. It carries out the reaction L-lysyl-[protein] + 3 S-adenosyl-L-methionine = N(6),N(6),N(6)-trimethyl-L-lysyl-[protein] + 3 S-adenosyl-L-homocysteine + 3 H(+). In terms of biological role, methylates ribosomal protein L11. The sequence is that of Ribosomal protein L11 methyltransferase from Campylobacter jejuni subsp. doylei (strain ATCC BAA-1458 / RM4099 / 269.97).